Consider the following 461-residue polypeptide: Deoxyguanosinetriphosphate triphosphohydrolase-like protein (461 aa).

Positions 22–41 are disordered; it reads ERFLPDPPREKDNRPPFRRD. The span at 24–41 shows a compositional bias: basic and acidic residues; that stretch reads FLPDPPREKDNRPPFRRD. The HD domain occupies 72-285; it reads RLTHSLEVAQ…MELADDIAYG (214 aa).

Belongs to the dGTPase family. Type 2 subfamily.

This Haemophilus influenzae (strain PittGG) protein is Deoxyguanosinetriphosphate triphosphohydrolase-like protein.